The sequence spans 66 residues: UPF0434 protein Jann_0424 (66 aa).

Belongs to the UPF0434 family.

The polypeptide is UPF0434 protein Jann_0424 (Jannaschia sp. (strain CCS1)).